The primary structure comprises 304 residues: Large ribosomal subunit protein uL18z (304 aa).

Residues 285–304 (LNALNSSAGADDDDEEEDDE) are disordered. The segment covering 294–304 (ADDDDEEEDDE) has biased composition (acidic residues).

This sequence belongs to the universal ribosomal protein uL18 family. Component of the large ribosomal subunit (LSU).

The protein resides in the cytoplasm. It localises to the nucleus. Functionally, component of the ribosome, a large ribonucleoprotein complex responsible for the synthesis of proteins in the cell. The small ribosomal subunit (SSU) binds messenger RNAs (mRNAs) and translates the encoded message by selecting cognate aminoacyl-transfer RNA (tRNA) molecules. The large subunit (LSU) contains the ribosomal catalytic site termed the peptidyl transferase center (PTC), which catalyzes the formation of peptide bonds, thereby polymerizing the amino acids delivered by tRNAs into a polypeptide chain. The nascent polypeptides leave the ribosome through a tunnel in the LSU and interact with protein factors that function in enzymatic processing, targeting, and the membrane insertion of nascent chains at the exit of the ribosomal tunnel. The protein is Large ribosomal subunit protein uL18z (RPL5A) of Oryza sativa subsp. japonica (Rice).